Reading from the N-terminus, the 389-residue chain is Probable protein phosphatase 2C 12 (389 aa).

A PPM-type phosphatase domain is found at 42–356 (VASLFSQRGK…DDCSAVCLFL (315 aa)). 2 residues coordinate Mn(2+): Asp77 and Gly78. Positions 119–145 (AFSDDAAASSSADSSGNSSPQPSASAS) are disordered. Residues 121–145 (SDDAAASSSADSSGNSSPQPSASAS) are compositionally biased toward low complexity. Residues Asp301 and Asp347 each coordinate Mn(2+).

Belongs to the PP2C family. Mg(2+) serves as cofactor. It depends on Mn(2+) as a cofactor.

It catalyses the reaction O-phospho-L-seryl-[protein] + H2O = L-seryl-[protein] + phosphate. The catalysed reaction is O-phospho-L-threonyl-[protein] + H2O = L-threonyl-[protein] + phosphate. In Oryza sativa subsp. japonica (Rice), this protein is Probable protein phosphatase 2C 12.